The sequence spans 208 residues: Small ribosomal subunit protein uS4 (208 aa).

The region spanning 98 to 161 (RRLDNVVYRL…RKSKRFKEVF (64 aa)) is the S4 RNA-binding domain.

This sequence belongs to the universal ribosomal protein uS4 family. Part of the 30S ribosomal subunit. Contacts protein S5. The interaction surface between S4 and S5 is involved in control of translational fidelity.

One of the primary rRNA binding proteins, it binds directly to 16S rRNA where it nucleates assembly of the body of the 30S subunit. In terms of biological role, with S5 and S12 plays an important role in translational accuracy. The sequence is that of Small ribosomal subunit protein uS4 from Halothermothrix orenii (strain H 168 / OCM 544 / DSM 9562).